The sequence spans 497 residues: Aspartyl/glutamyl-tRNA(Asn/Gln) amidotransferase subunit B (497 aa).

The protein belongs to the GatB/GatE family. GatB subfamily. Heterotrimer of A, B and C subunits.

It catalyses the reaction L-glutamyl-tRNA(Gln) + L-glutamine + ATP + H2O = L-glutaminyl-tRNA(Gln) + L-glutamate + ADP + phosphate + H(+). The catalysed reaction is L-aspartyl-tRNA(Asn) + L-glutamine + ATP + H2O = L-asparaginyl-tRNA(Asn) + L-glutamate + ADP + phosphate + 2 H(+). Functionally, allows the formation of correctly charged Asn-tRNA(Asn) or Gln-tRNA(Gln) through the transamidation of misacylated Asp-tRNA(Asn) or Glu-tRNA(Gln) in organisms which lack either or both of asparaginyl-tRNA or glutaminyl-tRNA synthetases. The reaction takes place in the presence of glutamine and ATP through an activated phospho-Asp-tRNA(Asn) or phospho-Glu-tRNA(Gln). The polypeptide is Aspartyl/glutamyl-tRNA(Asn/Gln) amidotransferase subunit B (Novosphingobium aromaticivorans (strain ATCC 700278 / DSM 12444 / CCUG 56034 / CIP 105152 / NBRC 16084 / F199)).